A 412-amino-acid polypeptide reads, in one-letter code: Serine hydroxymethyltransferase (412 aa).

(6S)-5,6,7,8-tetrahydrofolate-binding positions include leucine 117 and 121–123; that span reads GHL. Residue lysine 226 is modified to N6-(pyridoxal phosphate)lysine.

This sequence belongs to the SHMT family. In terms of assembly, homodimer. Requires pyridoxal 5'-phosphate as cofactor.

The protein localises to the cytoplasm. It catalyses the reaction (6R)-5,10-methylene-5,6,7,8-tetrahydrofolate + glycine + H2O = (6S)-5,6,7,8-tetrahydrofolate + L-serine. It functions in the pathway one-carbon metabolism; tetrahydrofolate interconversion. Its pathway is amino-acid biosynthesis; glycine biosynthesis; glycine from L-serine: step 1/1. Functionally, catalyzes the reversible interconversion of serine and glycine with tetrahydrofolate (THF) serving as the one-carbon carrier. This reaction serves as the major source of one-carbon groups required for the biosynthesis of purines, thymidylate, methionine, and other important biomolecules. Also exhibits THF-independent aldolase activity toward beta-hydroxyamino acids, producing glycine and aldehydes, via a retro-aldol mechanism. The chain is Serine hydroxymethyltransferase from Staphylococcus haemolyticus (strain JCSC1435).